Here is a 473-residue protein sequence, read N- to C-terminus: Cysteine--tRNA ligase (473 aa).

Cys29 serves as a coordination point for Zn(2+). The short motif at 31–41 is the 'HIGH' region element; it reads PTVYDRAHLGN. Zn(2+) contacts are provided by Cys225, His250, and Glu254. The short motif at 281–285 is the 'KMSKS' region element; sequence KMSKS. Position 284 (Lys284) interacts with ATP.

Belongs to the class-I aminoacyl-tRNA synthetase family. As to quaternary structure, monomer. Zn(2+) is required as a cofactor.

The protein localises to the cytoplasm. It catalyses the reaction tRNA(Cys) + L-cysteine + ATP = L-cysteinyl-tRNA(Cys) + AMP + diphosphate. The chain is Cysteine--tRNA ligase from Roseobacter denitrificans (strain ATCC 33942 / OCh 114) (Erythrobacter sp. (strain OCh 114)).